The sequence spans 277 residues: Alpha carbonic anhydrase 3 (277 aa).

A signal peptide spans 1–19 (MKTIILFVTFLALSSSSLA). Positions 24–259 (TEFHYKPGEI…LNGRLVYLNE (236 aa)) constitute an Alpha-carbonic anhydrase domain. C49 and C209 form a disulfide bridge. N-linked (GlcNAc...) asparagine glycans are attached at residues N70 and N107. Zn(2+) contacts are provided by H117, H119, and H136. Substrate is bound at residue 205–206 (TT). The tract at residues 257–277 (LNEQSSPSPTPRLRIPRVGPV) is disordered.

It belongs to the alpha-class carbonic anhydrase family. Zn(2+) is required as a cofactor. Post-translationally, N-glycosylated. As to expression, expressed in flowers and siliques.

The protein resides in the plastid. The protein localises to the chloroplast stroma. The catalysed reaction is hydrogencarbonate + H(+) = CO2 + H2O. In terms of biological role, reversible hydration of carbon dioxide. This chain is Alpha carbonic anhydrase 3 (ACA3), found in Arabidopsis thaliana (Mouse-ear cress).